The following is a 1725-amino-acid chain: Latrophilin Cirl (1725 aa).

Topologically, residues 1–757 (MALNELGNCA…LFTMFDGNMR (757 aa)) are extracellular. One can recognise an SUEL-type lectin domain in the interval 18–107 (ACEGKQLTIE…KYLEAHYQCI (90 aa)). N135 is a glycosylation site (N-linked (GlcNAc...) asparagine). The disordered stretch occupies residues 164-284 (AVQPTHSTPS…SAANNSVNIG (121 aa)). Composition is skewed to low complexity over residues 167–176 (PTHSTPSSST) and 224–236 (SSSS…SAGN). Residues N236, N278, N326, N388, N645, N693, and N720 are each glycosylated (N-linked (GlcNAc...) asparagine). Over residues 259–282 (LLTTKSSPNRTPGTTASAANNSVN) the composition is skewed to polar residues. The segment at 361–390 (DDEYDDDLPAASSTTPQPSNNGGDCVHNSS) is disordered. Positions 371 to 390 (ASSTTPQPSNNGGDCVHNSS) are enriched in polar residues. The GAIN-B domain occupies 551–744 (RNVVQKVKNI…AILMDVVDEH (194 aa)). Disulfide bonds link C699–C726 and C714–C728. Positions 699 to 744 (CVFWNYIDHAWSANGCSLESTNRTHSVCSCNHLTNFAILMDVVDEH) are GPS. A helical transmembrane segment spans residues 758–778 (IFIYISVAICVVFIIIALLTL). Residues 779 to 791 (KLFNGVFVKSART) lie on the Cytoplasmic side of the membrane. Residues 792–812 (SIYSSIYICLLAIELLFLLGI) form a helical membrane-spanning segment. At 813–818 (EQTETS) the chain is on the extracellular side. A helical transmembrane segment spans residues 819–839 (IFCGFITVFLHCAILSGTAWF). At 840–865 (CYEAFHSYSTLTSDELLLEVDQTPKV) the chain is on the cytoplasmic side. The helical transmembrane segment at 866–886 (NCYYLLSYGLSLSVVAISLVI) threads the bilayer. Over 887–910 (DPSTYTQNDYCVLMEANALFYSTF) the chain is Extracellular. A helical transmembrane segment spans residues 911–931 (VAPVLIFFVAAITYTFLSWII). The Cytoplasmic portion of the chain corresponds to 932–958 (MRRKSRTALKTKEHTRLANVRFDIRCS). The chain crosses the membrane as a helical span at residues 959 to 979 (FVFLLLLSVVWCCAYFYLRGA). The Extracellular portion of the chain corresponds to 980 to 986 (KLDEDGA). Residues 987-1007 (PIYGYCFICFNTLLGIYIFVF) form a helical membrane-spanning segment. The Cytoplasmic portion of the chain corresponds to 1008-1725 (HCIQNEKIRR…VRCYLEPLAK (718 aa)). A disordered region spans residues 1056–1088 (TANQSAGTLSKSKSKLPLGAGDEARDGDAQQQQ). S1153 is subject to Phosphoserine. Disordered stretches follow at residues 1236–1263 (HNNQ…LHSR), 1309–1337 (QQLQ…AEQH), 1472–1555 (GGGS…SDER), and 1636–1705 (LFGH…QARH). Positions 1237 to 1246 (NNQHGKKKRG) are enriched in basic residues. Residues S1255 and S1262 each carry the phosphoserine modification. A compositionally biased stretch (low complexity) spans 1309-1327 (QQLQQQQLRQQRQQQQQQL). A phosphoserine mark is found at S1328 and S1329. A compositionally biased stretch (low complexity) spans 1478–1496 (GGSVTSRSQQQQQQQLKQK). Composition is skewed to acidic residues over residues 1505 to 1522 (DDDD…DEVT) and 1532 to 1543 (CDDEDNESDIDD). Residues 1651 to 1666 (QTPAQKRQQLQKLSPQ) are compositionally biased toward polar residues. The segment covering 1667 to 1683 (STTSSSSHTSHSNPQHA) has biased composition (low complexity). Residues 1684-1693 (PAHHLQHHHT) show a composition bias toward basic residues. The segment covering 1694 to 1705 (QQQQQQQQQARH) has biased composition (low complexity).

It belongs to the G-protein coupled receptor 2 family. LN-TM7 subfamily. Forms a heterodimer, consisting of a large extracellular region non-covalently linked to a seven-transmembrane moiety. In terms of processing, proteolytically cleaved into 2 subunits, an extracellular subunit and a seven-transmembrane subunit.

Its subcellular location is the cell membrane. The sequence is that of Latrophilin Cirl from Drosophila mojavensis (Fruit fly).